An 85-amino-acid chain; its full sequence is Putative membrane protein insertion efficiency factor (85 aa).

The protein belongs to the UPF0161 family.

Its subcellular location is the cell inner membrane. Functionally, could be involved in insertion of integral membrane proteins into the membrane. This chain is Putative membrane protein insertion efficiency factor, found in Serratia proteamaculans (strain 568).